A 1009-amino-acid chain; its full sequence is Glutamate receptor ionotropic, delta-2 (1009 aa).

Residues 1–23 form the signal peptide; sequence MKVFPAVLFLITFWSLEWEPVLP. The Extracellular segment spans residues 24-566; it reads DSIIHIGAIF…DMFACLAPFD (543 aa). N-linked (GlcNAc...) asparagine glycans are attached at residues Asn293, Asn306, Asn390, and Asn426. Residues Glu531, Val534, and Asp535 each contribute to the Ca(2+) site. A helical transmembrane segment spans residues 567-587; it reads LSLWACIAGTVLLVGTLVYLL. The Cytoplasmic segment spans residues 588–635; it reads NWLNPPRLPMGSVSSTTLYNSMWFVYGSFVQQGGEVPYTTLATRMMMG. The chain crosses the membrane as a helical span at residues 636-656; sequence VWWLFALIVISSYTANLAAFL. Over 657–830 the chain is Extracellular; the sequence is TISRIENSIQ…KSGSALDIHS (174 aa). Residue Asn713 is glycosylated (N-linked (GlcNAc...) asparagine). Positions 753, 755, and 757 each coordinate Ca(2+). The helical transmembrane segment at 831 to 851 threads the bilayer; that stretch reads FAGVFFVLAAGVVLSCLIATV. Residues 852 to 1009 lie on the Cytoplasmic side of the membrane; the sequence is ETWWTRRKGS…GNDPDRGTSI (158 aa). Positions 989-1009 are disordered; the sequence is YQPTPAPNFSYGNDPDRGTSI.

It belongs to the glutamate-gated ion channel (TC 1.A.10.1) family. GRID2 subfamily. In terms of assembly, tetramer; dimer of dimers. Expressed in cerebellar Purkinje cells, in crest cells in the medial octavolateral nucleus and in type I neurons of the optic tectum.

The protein localises to the postsynaptic cell membrane. It catalyses the reaction Ca(2+)(in) = Ca(2+)(out). It carries out the reaction Na(+)(in) = Na(+)(out). In terms of biological role, member of the ionotropic glutamate receptor family, which plays a crucial role in synaptic organization and signal transduction in the central nervous system. Although it shares structural features with ionotropic glutamate receptors, does not bind glutamate as a primary ligand. Promotes synaptogenesis and mediates the D-Serine-dependent long term depression signals and AMPA receptor endocytosis of cerebellar parallel fiber-Purkinje cell (PF-PC) synapses through the NRX1B-CBLN1-GRID2 triad complex. In the presence of neurexins and cerebellins, forms cation-selective channels that are proposed to be gated by glycine and D-serine. However, recent research disputes this ligand-gated cation channel activity. Cation-selective ion channel activity can be triggered by GRM1 in Purkinje cells. The polypeptide is Glutamate receptor ionotropic, delta-2 (Danio rerio (Zebrafish)).